The sequence spans 307 residues: F-box protein At5g03100 (307 aa).

The 47-residue stretch at 8–54 (VDFISSLPDEILHHILANTPTKLAIRTSVLSKRWKHVWYETPSISIV) folds into the F-box domain.

The protein is F-box protein At5g03100 of Arabidopsis thaliana (Mouse-ear cress).